The chain runs to 228 residues: Deoxyribose-phosphate aldolase (228 aa).

Residue Asp93 is the Proton donor/acceptor of the active site. Lys159 serves as the catalytic Schiff-base intermediate with acetaldehyde. The active-site Proton donor/acceptor is Lys188.

It belongs to the DeoC/FbaB aldolase family. DeoC type 1 subfamily.

The protein localises to the cytoplasm. It catalyses the reaction 2-deoxy-D-ribose 5-phosphate = D-glyceraldehyde 3-phosphate + acetaldehyde. It functions in the pathway carbohydrate degradation; 2-deoxy-D-ribose 1-phosphate degradation; D-glyceraldehyde 3-phosphate and acetaldehyde from 2-deoxy-alpha-D-ribose 1-phosphate: step 2/2. Its function is as follows. Catalyzes a reversible aldol reaction between acetaldehyde and D-glyceraldehyde 3-phosphate to generate 2-deoxy-D-ribose 5-phosphate. This chain is Deoxyribose-phosphate aldolase, found in Carboxydothermus hydrogenoformans (strain ATCC BAA-161 / DSM 6008 / Z-2901).